The primary structure comprises 216 residues: Ras-related protein RABA1b (216 aa).

Residue G20–S27 coordinates GTP. Residues S42 to F50 carry the Effector region motif. Residues D68–Q72, N126–D129, and S156–A157 each bind GTP. Residues C213 and C214 are each lipidated (S-geranylgeranyl cysteine).

This sequence belongs to the small GTPase superfamily. Rab family.

Its subcellular location is the cell membrane. In terms of biological role, intracellular vesicle trafficking and protein transport. The protein is Ras-related protein RABA1b (RABA1B) of Arabidopsis thaliana (Mouse-ear cress).